Reading from the N-terminus, the 353-residue chain is Rhodopsin (353 aa).

Residues 1–36 (MNGTEGPYFYVPMVNTSGIVRSPYEYPQYYLVNPAA) are Extracellular-facing. Asparagine 2 and asparagine 15 each carry an N-linked (GlcNAc...) asparagine glycan. A helical membrane pass occupies residues 37–61 (YARLGAYMFLLILVGFPINFLTLYV). At 62 to 73 (TIEHKKLRTPLN) the chain is on the cytoplasmic side. A helical membrane pass occupies residues 74-96 (YILLNLAVADLFMVFGGFTTTMY). The Extracellular portion of the chain corresponds to 97-110 (TSMHGYFVLGRLGC). An intrachain disulfide couples cysteine 110 to cysteine 187. The helical transmembrane segment at 111–133 (NIEGFFATLGGEIALWSLVVLAI) threads the bilayer. Positions 134 to 136 (ERW) match the 'Ionic lock' involved in activated form stabilization motif. The Cytoplasmic segment spans residues 134 to 152 (ERWVVVCKPISNFRFGENH). Residues 153-173 (AIMGLAFTWLMALACAAPPLV) traverse the membrane as a helical segment. Residues 174–202 (GWSRYIPEGMQCSCGIDYYTRAEGFNNES) lie on the Extracellular side of the membrane. N-linked (GlcNAc...) asparagine glycosylation occurs at asparagine 200. A helical membrane pass occupies residues 203–224 (FVIYMFVCHFTVPLMVVFFCYG). Topologically, residues 225–252 (RLLCAVKEAAAAQQESETTQRAEREVTR) are cytoplasmic. A helical membrane pass occupies residues 253-274 (MVIMMVVAFLVCWLPYASVAWW). Over 275 to 286 (IFTHQGSEFGPV) the chain is Extracellular. A helical membrane pass occupies residues 287 to 308 (FMTIPAFFAKSSSIYNPMIYIC). Lysine 296 carries the post-translational modification N6-(retinylidene)lysine. Residues 309 to 353 (LNKQFRHCMITTLCCGKNPFEEEEGASTASKTEASSVSSSSVSPA) are Cytoplasmic-facing. 2 S-palmitoyl cysteine lipidation sites follow: cysteine 322 and cysteine 323. Residues 331-353 (EEGASTASKTEASSVSSSSVSPA) are disordered. The segment covering 334–353 (ASTASKTEASSVSSSSVSPA) has biased composition (low complexity).

It belongs to the G-protein coupled receptor 1 family. Opsin subfamily. In terms of processing, phosphorylated on some or all of the serine and threonine residues present in the C-terminal region. Contains one covalently linked retinal chromophore.

The protein localises to the membrane. It localises to the cell projection. It is found in the cilium. Its subcellular location is the photoreceptor outer segment. Its function is as follows. Photoreceptor required for image-forming vision at low light intensity. While most salt water fish species use retinal as chromophore, most freshwater fish use 3-dehydroretinal, or a mixture of retinal and 3-dehydroretinal. Light-induced isomerization of 11-cis to all-trans retinal triggers a conformational change that activates signaling via G-proteins. Subsequent receptor phosphorylation mediates displacement of the bound G-protein alpha subunit by arrestin and terminates signaling. The protein is Rhodopsin (rho) of Sarpa salpa (Salema).